Consider the following 486-residue polypeptide: MTKITRVSLASPPDGGWGWMIVAGCFLVTICTRAVTRCISIFFVEFQTYFAQDYSQTAWIHSIVDCMTMLCAPLGSVVSNQLSCQAGIMLGGLLASTGFILGSFATSLKHLYLSLGVLTGLGFALCYSPAIAMVGKYFSRRKALAYGIAMSGSGIGTFILAPVVQLLIEQFSWRGALLILGGFVLNLCVCGALMRPITLKEDRSVPEKNHNRESQREDCKQASPYSPLTKECTETRLCCSLQQEYGFLLMSDFVVLAVSVLFMAYGCSPLFVYLVPYALSVGVSHHQAAFLMSILGVIDIVGNITFGWLTDRRCLKNYRYVCYLFAVALDGLCYLCLPMLQTFPLLVPFSCTFGYFDGAYVTLIPVVTAEIVGTTSLSSALGVVYFLHAVPYLVSPPIAGWLVDTTGSYTAAFLLCGFAMIFSSILLGFVRIVKRMKRTQVPFPVKDSDPKLQLWTNGSVAYSVARELDQKDEEPLPKARSGCNLT.

Topologically, residues 1-9 (MTKITRVSL) are cytoplasmic. Transmembrane regions (helical) follow at residues 10–30 (ASPP…LVTI), 58–78 (AWIH…GSVV), 86–106 (AGIM…SFAT), 115–135 (LGVL…AMVG), 148–168 (IAMS…QLLI), 177–197 (LLIL…MRPI), 253–273 (FVVL…LFVY), 289–309 (AFLM…FGWL), 320–340 (YVCY…LPML), 353–373 (FGYF…EIVG), 383–403 (VVYF…GWLV), and 410–430 (TAAF…LGFV). Residues 431–486 (RIVKRMKRTQVPFPVKDSDPKLQLWTNGSVAYSVARELDQKDEEPLPKARSGCNLT) are Cytoplasmic-facing.

Belongs to the major facilitator superfamily. Monocarboxylate porter (TC 2.A.1.13) family. Interacts with isoform 2 of BSG; this interaction is required for its localization to the plasma membrane. As to expression, highly expressed in the lung, liver, kidney, and pancreas. Expressed in eye lens.

Its subcellular location is the cell membrane. The protein resides in the basolateral cell membrane. The enzyme catalyses creatine(in) = creatine(out). The catalysed reaction is guanidinoacetate(in) = guanidinoacetate(out). Creatine uptake is inhibited by carbonyl cyanide 3-chlorophenylhydrazone (CCCP) and by valinomycin. Its function is as follows. Functions as a transporter for creatine and as well for its precursor guanidinoacetate. Transport of creatine and GAA is independent of resting membrane potential and extracellular Na(+), Cl(-), or pH. Contributes to the process of creatine biosynthesis and distribution. The polypeptide is Monocarboxylate transporter 12 (Mus musculus (Mouse)).